Reading from the N-terminus, the 169-residue chain is S-ribosylhomocysteine lyase (169 aa).

Fe cation-binding residues include histidine 54, histidine 58, and cysteine 128.

The protein belongs to the LuxS family. As to quaternary structure, homodimer. The cofactor is Fe cation.

The catalysed reaction is S-(5-deoxy-D-ribos-5-yl)-L-homocysteine = (S)-4,5-dihydroxypentane-2,3-dione + L-homocysteine. In terms of biological role, involved in the synthesis of autoinducer 2 (AI-2) which is secreted by bacteria and is used to communicate both the cell density and the metabolic potential of the environment. The regulation of gene expression in response to changes in cell density is called quorum sensing. Catalyzes the transformation of S-ribosylhomocysteine (RHC) to homocysteine (HC) and 4,5-dihydroxy-2,3-pentadione (DPD). This Shewanella halifaxensis (strain HAW-EB4) protein is S-ribosylhomocysteine lyase.